Here is an 885-residue protein sequence, read N- to C-terminus: DNA mismatch repair protein MutS (885 aa).

626–633 contributes to the ATP binding site; sequence GPNMGGKS.

The protein belongs to the DNA mismatch repair MutS family.

This protein is involved in the repair of mismatches in DNA. It is possible that it carries out the mismatch recognition step. This protein has a weak ATPase activity. The polypeptide is DNA mismatch repair protein MutS (Burkholderia cenocepacia (strain HI2424)).